We begin with the raw amino-acid sequence, 194 residues long: Cysteine and glycine-rich protein 3 (194 aa).

Residues 1-5 (MPNWG) are interaction with TCAP. An LIM zinc-binding 1 domain is found at 10–61 (CGACEKTVYHAEEIQCNGRSFHKTCFHCMACRKALDSTTVAAHESEIYCKVC). Positions 64–69 (RRYGPK) match the Nuclear localization signal motif. The interaction with CLF2 stretch occupies residues 94–105 (QSPKPARAATTS). Phosphoserine is present on residues Ser95, Ser111, and Ser153. The region spanning 120–171 (CPRCGKSVYAAEKVMGGGKPWHKTCFRCAICGKSLESTNVTDKDGELYCKVC) is the LIM zinc-binding 2 domain.

As to quaternary structure, self-associates. Oligomeric in the cytoplasm and monomeric in the nucleus. Homooligomers preferentially form along the actin cytoskeleton. Interacts with TCAP. Interacts with LDHD, MYOD1, MYOG, ACTN2, NRAP, MYF6. Interacts (via N-terminus)D with GLRX3 (via C-terminus) and PPP3CA; GLRX3 and calcineurin compete for interaction with CSRP3. Interacts with CFL2; the stoichiometry influences F-actin depolymerization and possibly two molecules of CFL2 can interact with one molecule of CSRP3 resulting in the highest functional impact; the interaction is stronger with phosphorylated CFL2. Phosphorylated by PKC/PRKCA.

The protein localises to the nucleus. The protein resides in the cytoplasm. It localises to the cytoskeleton. It is found in the myofibril. Its subcellular location is the sarcomere. The protein localises to the z line. Its function is as follows. Positive regulator of myogenesis. Acts as a cofactor for myogenic bHLH transcription factors such as MYOD1, and probably MYOG and MYF6. Enhances the DNA-binding activity of the MYOD1:TCF3 isoform E47 complex and may promote formation of a functional MYOD1:TCF3 isoform E47:MEF2A complex involved in myogenesis. Plays a crucial and specific role in the organization of cytosolic structures in cardiomyocytes. Could play a role in mechanical stretch sensing. May be a scaffold protein that promotes the assembly of interacting proteins at Z-line structures. It is essential for calcineurin anchorage to the Z line. Required for stress-induced calcineurin-NFAT activation. The role in regulation of cytoskeleton dynamics by association with CFL2 is reported conflictingly. Proposed to contribute to the maintenance of muscle cell integrity through an actin-based mechanism. Can directly bind to actin filaments, cross-link actin filaments into bundles without polarity selectivity and protect them from dilution- and cofilin-mediated depolymerization; the function seems to involve its self-association. In vitro can inhibit PKC/PRKCA activity. Proposed to be involved in cardiac stress signaling by down-regulating excessive PKC/PRKCA signaling. This Mus musculus (Mouse) protein is Cysteine and glycine-rich protein 3 (Csrp3).